Consider the following 179-residue polypeptide: Apoptosis regulator Bcl-2 homolog (179 aa).

The short motif at 76–95 (ELFKDLINWGRICGFIVFSA) is the BH1 element. Positions 126-141 (PWMISHGGQEEFLAFS) match the BH2 motif.

The protein belongs to the Bcl-2 family. In terms of assembly, interacts with host BECN1 (via BH3 homology domain); this interaction allows the virus to inhibit BECN1, and thus autophagy. Interacts with host BID. Interacts with host BAX.

It is found in the host mitochondrion. It localises to the host endoplasmic reticulum. In terms of biological role, suppresses apoptosis in host cell to promote the viral replication. Has the ability to potentially bind to all the members of the proapoptotic Bcl-2 family. Inhibits autophagy by interacting with host Beclin 1 (BECN1). This is Apoptosis regulator Bcl-2 homolog from Ornithodoros (relapsing fever ticks).